The sequence spans 463 residues: L-seryl-tRNA(Sec) selenium transferase (463 aa).

Lys-295 bears the N6-(pyridoxal phosphate)lysine mark.

This sequence belongs to the SelA family. As to quaternary structure, homodecamer; pentamer of dimers. Binds only one seryl-tRNA(Sec) per dimer. Pyridoxal 5'-phosphate serves as cofactor.

Its subcellular location is the cytoplasm. The catalysed reaction is L-seryl-tRNA(Sec) + selenophosphate + H(+) = L-selenocysteinyl-tRNA(Sec) + phosphate. The protein operates within aminoacyl-tRNA biosynthesis; selenocysteinyl-tRNA(Sec) biosynthesis; selenocysteinyl-tRNA(Sec) from L-seryl-tRNA(Sec) (bacterial route): step 1/1. Functionally, converts seryl-tRNA(Sec) to selenocysteinyl-tRNA(Sec) required for selenoprotein biosynthesis. The sequence is that of L-seryl-tRNA(Sec) selenium transferase from Escherichia fergusonii (strain ATCC 35469 / DSM 13698 / CCUG 18766 / IAM 14443 / JCM 21226 / LMG 7866 / NBRC 102419 / NCTC 12128 / CDC 0568-73).